A 360-amino-acid polypeptide reads, in one-letter code: S-adenosylmethionine-dependent nucleotide dehydratase RSAD2 (360 aa).

The interval 44-71 is disordered; it reads KGQPRVRGEPKETQETHEDPGSAQPTTP. The segment covering 49-63 has biased composition (basic and acidic residues); it reads VRGEPKETQETHEDP. One can recognise a Radical SAM core domain in the interval 68 to 288; that stretch reads PTTPVSVNYH…LQRHKDVSCL (221 aa). [4Fe-4S] cluster contacts are provided by cysteine 82, cysteine 86, and cysteine 89. Lysine 196 is subject to N6-acetyllysine. A Glycyl lysine isopeptide (Lys-Gly) (interchain with G-Cter in ubiquitin) cross-link involves residue lysine 205.

This sequence belongs to the radical SAM superfamily. RSAD2 family. In terms of assembly, homodimer. Interacts with IRAK1 and TRAF6. Interacts with FPPS. Interacts with HADHB. Interacts (via C-terminus) with VAPA/VAP33 (via C-terminus). Requires [4Fe-4S] cluster as cofactor. Acetylated by HAT1. HAT1-mediated acetylation of Lys-196 in turn recruits UBE4A that stimulates RSAD2 polyubiquitination leading to proteasomal degradation. In terms of processing, 'Lys-6'-linked polyubiquitination at Lys-205 leads to RSAD2 protein degradation. As to expression, in neonatal rat tibia, specifically localized in cells of the periosteum, in osteoblasts lining endosteal and peristeal bone surfaces, to articular surfaces of cartilage and in perichondral cells but not in chondrocytes (at protein level). Expressed predominantly in bone marrow and spleen.

The protein resides in the endoplasmic reticulum membrane. Its subcellular location is the golgi apparatus. It is found in the endoplasmic reticulum. It localises to the lipid droplet. The protein localises to the mitochondrion. The protein resides in the mitochondrion inner membrane. Its subcellular location is the mitochondrion outer membrane. The enzyme catalyses CTP + AH2 + S-adenosyl-L-methionine = 3'-deoxy-3',4'-didehydro-CTP + 5'-deoxyadenosine + L-methionine + A + H2O + H(+). IRAK1 and TRAF6 synergistically activate RSAD2 increasing its activity with CTP as substrate about 10-fold. In terms of biological role, interferon-inducible antiviral protein which plays a major role in the cell antiviral state induced by type I and type II interferon. Catalyzes the conversion of cytidine triphosphate (CTP) to 3'-deoxy-3',4'-didehydro-CTP (ddhCTP) via a SAM-dependent radical mechanism. In turn, ddhCTP acts as a chain terminator for the RNA-dependent RNA polymerases from multiple viruses and directly inhibits viral replication. Therefore, inhibits a wide range of DNA and RNA viruses. Also promotes TLR7 and TLR9-dependent production of IFN-beta production in plasmacytoid dendritic cells (pDCs) by facilitating 'Lys-63'-linked ubiquitination of IRAK1 by TRAF6. Plays a role in CD4+ T-cells activation and differentiation. Facilitates T-cell receptor (TCR)-mediated GATA3 activation and optimal T-helper 2 (Th2) cytokine production by modulating NFKB1 and JUNB activities. Can inhibit secretion of soluble proteins. This is S-adenosylmethionine-dependent nucleotide dehydratase RSAD2 from Rattus norvegicus (Rat).